Consider the following 203-residue polypeptide: DNA-binding transcriptional repressor ScoC (203 aa).

The 145-residue stretch at A13 to G157 folds into the HTH marR-type domain. The H-T-H motif DNA-binding region spans I63–E86. The segment at K183–S203 is disordered. Over residues A191–S203 the composition is skewed to acidic residues.

In terms of assembly, homodimer. Interacts with SinR.

Negative regulator of protease production and sporulation. Acts by binding directly to the promoter of protease genes (aprE and nprE), and by repressing oligopeptide permease operons (appABCDF and oppABCDF), thereby preventing uptake of oligopeptides required for initiation of sporulation. Acts with SinR as a corepressor of epr expression. Binds to non-m6A-5-methylated 5'-GACGAG-3' sites, tested with scpA; when the target is methylated by DnmA, this repressor no longer binds and transcription is up-regulated. The protein is DNA-binding transcriptional repressor ScoC of Bacillus subtilis (strain 168).